The sequence spans 443 residues: Probable glycine dehydrogenase (decarboxylating) subunit 1 (443 aa).

Belongs to the GcvP family. N-terminal subunit subfamily. The glycine cleavage system is composed of four proteins: P, T, L and H. In this organism, the P 'protein' is a heterodimer of two subunits.

The enzyme catalyses N(6)-[(R)-lipoyl]-L-lysyl-[glycine-cleavage complex H protein] + glycine + H(+) = N(6)-[(R)-S(8)-aminomethyldihydrolipoyl]-L-lysyl-[glycine-cleavage complex H protein] + CO2. The glycine cleavage system catalyzes the degradation of glycine. The P protein binds the alpha-amino group of glycine through its pyridoxal phosphate cofactor; CO(2) is released and the remaining methylamine moiety is then transferred to the lipoamide cofactor of the H protein. This Chlorobium limicola (strain DSM 245 / NBRC 103803 / 6330) protein is Probable glycine dehydrogenase (decarboxylating) subunit 1.